The chain runs to 392 residues: Glyceraldehyde-3-phosphate dehydrogenase A, chloroplastic (392 aa).

A chloroplast-targeting transit peptide spans 1-56; that stretch reads NSSLQVSNKGFSEFSGLRTSSAIPFGRKTNDDLLSVVAFQTSVIGGGNSKRGVVEA. NADP(+) contacts are provided by residues 67-68, Asp91, and Arg136; that span reads RI. D-glyceraldehyde 3-phosphate contacts are provided by residues 208-210, Thr239, Arg254, 267-268, and Arg290; these read SCT and TG. Cys209 (nucleophile) is an active-site residue. Asn372 serves as a coordination point for NADP(+).

Belongs to the glyceraldehyde-3-phosphate dehydrogenase family. Tetramer of either four A chains (GAPDH 2) or two A and two B chains (GAPDH 1).

Its subcellular location is the plastid. The protein resides in the chloroplast. The catalysed reaction is D-glyceraldehyde 3-phosphate + phosphate + NADP(+) = (2R)-3-phospho-glyceroyl phosphate + NADPH + H(+). It functions in the pathway carbohydrate biosynthesis; Calvin cycle. This Nicotiana tabacum (Common tobacco) protein is Glyceraldehyde-3-phosphate dehydrogenase A, chloroplastic (GAPA).